Reading from the N-terminus, the 418-residue chain is Trans-acting enoyl reductase (418 aa).

Belongs to the saccharopine dehydrogenase family. Enoyl reductase subfamily.

Its function is as follows. Involved in the reduction of the double bond between C-4 and C-5 during phthiocerol dimycocerosates (DIM A) and glycosylated phenolphthiocerol dimycocerosates (PGL) biosynthesis. The protein is Trans-acting enoyl reductase of Mycobacterium tuberculosis (strain ATCC 25177 / H37Ra).